We begin with the raw amino-acid sequence, 591 residues long: Mono(ADP-ribosyl)transferase SpvB (591 aa).

Residues 373–576 (PMMGGNSSRP…LRLSDDATAD (204 aa)) enclose the TR mART core domain. NAD(+) contacts are provided by residues R414 and 471–477 (RGLKLDK). Active-site residues include R471, S501, and E538. E538 is an NAD(+) binding site.

Belongs to the SpvB family.

The protein resides in the secreted. The catalysed reaction is L-arginyl-[protein] + NAD(+) = N(omega)-(ADP-D-ribosyl)-L-arginyl-[protein] + nicotinamide + H(+). Inhibited by novobiocin. In terms of biological role, mono-ADP-ribosylates eukaryotic muscle and non-muscle actin on 'Arg-177'. ADP-ribosylates all actins tested, has more activity on nonmuscle beta/gamma-actin than on muscle alpha-actin. Prefers monomeric G-actin but can weakly ADP-ribosylate F-actin. ADP-ribosylation prevents the polymerization of G-actin to F-actin, causing actin filament depolymerization, destruction of the cytoskeleton and cytotoxicity. Does not possess NAD(+)-glycohydrolase activity, unlike most mART enzymes. In Salmonella typhimurium, this protein is Mono(ADP-ribosyl)transferase SpvB (spvB).